The following is a 228-amino-acid chain: Ribose-5-phosphate isomerase A (228 aa).

Substrate-binding positions include 29-32 (TGST), 85-88 (DGAD), and 98-101 (KGGG). Glu-107 (proton acceptor) is an active-site residue. Lys-125 is a substrate binding site.

This sequence belongs to the ribose 5-phosphate isomerase family. As to quaternary structure, homodimer.

The enzyme catalyses aldehydo-D-ribose 5-phosphate = D-ribulose 5-phosphate. The protein operates within carbohydrate degradation; pentose phosphate pathway; D-ribose 5-phosphate from D-ribulose 5-phosphate (non-oxidative stage): step 1/1. Its function is as follows. Catalyzes the reversible conversion of ribose-5-phosphate to ribulose 5-phosphate. The polypeptide is Ribose-5-phosphate isomerase A (Staphylococcus aureus (strain MRSA252)).